We begin with the raw amino-acid sequence, 472 residues long: Tryptophanase (472 aa).

Position 270 is an N6-(pyridoxal phosphate)lysine (Lys-270).

It belongs to the beta-eliminating lyase family. In terms of assembly, homotetramer. It depends on pyridoxal 5'-phosphate as a cofactor.

It catalyses the reaction L-tryptophan + H2O = indole + pyruvate + NH4(+). Its pathway is amino-acid degradation; L-tryptophan degradation via pyruvate pathway; indole and pyruvate from L-tryptophan: step 1/1. This Haemophilus influenzae protein is Tryptophanase (tnaA).